A 269-amino-acid chain; its full sequence is Serine/arginine-rich splicing factor 5 (269 aa).

Positions 4-74 (CRVFIGRLNP…ERVTIEHARA (71 aa)) constitute an RRM 1 domain. Residues 73-105 (RARSRGGRGRGRYSDRFSSRRPRNDRRNAPPVR) are disordered. The span at 74-83 (ARSRGGRGRG) shows a compositional bias: basic residues. Residue Ser-86 is modified to Phosphoserine. The RRM 2 domain occupies 108 to 189 (NRLIVENLSS…SKRHRSRSRS (82 aa)). Position 167 is an N6-acetyllysine (Lys-167). Residues 174–269 (IKLIEGSKRH…SRSRSVDSGN (96 aa)) form a disordered region. Positions 181–226 (KRHRSRSRSRSRTRSSSRSRSRSRSRRSKSYSRSRSRSRSRSKSRS) are enriched in basic residues. Phosphoserine is present on residues Ser-224, Ser-226, Ser-230, Ser-247, and Ser-250. Low complexity predominate over residues 239–251 (RGSSSRSKSPASV).

The protein belongs to the splicing factor SR family. In terms of assembly, found in a pre-mRNA splicing complex with SRSF4/SFRS4, SRSF5/SFRS5, SNRNP70, SNRPA1, SRRM1 and SRRM2. Interacts with RBMY; the interaction inhibits SRSF5 pre-mRNA splicing. Interacts (via RS domain) with PHF5A (via N-terminus). In terms of processing, extensively phosphorylated on serine residues in the RS domain.

The protein resides in the nucleus. In terms of biological role, may be required for progression through G1 and entry into S phase of cell growth. May play a regulatory role in pre-mRNA splicing. Autoregulates its own expression. Plays a role in constitutive splicing and can modulate the selection of alternative splice sites. The polypeptide is Serine/arginine-rich splicing factor 5 (Srsf5) (Mus musculus (Mouse)).